The sequence spans 729 residues: Fibroblast growth factor receptor 2 (729 aa).

Positions 1 to 21 are cleaved as a signal peptide; the sequence is MFSWSYLMGLVMVATATLSLA. Residues 22–285 are Extracellular-facing; sequence RPSYNIAEDT…ELDSSSEYTE (264 aa). Positions 29 to 62 are disordered; the sequence is EDTTLEPEDANSSGDDEDDNDGSEDFTNDNNHMR. Positions 31-55 are enriched in acidic residues; that stretch reads TTLEPEDANSSGDDEDDNDGSEDFT. Residue Asn39 is glycosylated (N-linked (GlcNAc...) asparagine). 2 consecutive Ig-like C2-type domains span residues 64–157 and 166–268; these read PYWT…YHLD and PILQ…AWLT. Residues 71-88 form a heparin-binding region; that stretch reads KLEKKLHAVPAANTVKFR. Cys89 and Cys141 are oxidised to a cystine. 7 N-linked (GlcNAc...) asparagine glycosylation sites follow: Asn138, Asn151, Asn175, Asn207, Asn228, Asn241, and Asn256. Cysteines 188 and 252 form a disulfide. Residues 286–306 traverse the membrane as a helical segment; sequence IAIYCVGGFLITCMIGTIMVC. The Cytoplasmic portion of the chain corresponds to 307–729; that stretch reads HMKGRGKKSD…SQHTNGTIKT (423 aa). The residue at position 374 (Tyr374) is a Phosphotyrosine; by autocatalysis. One can recognise a Protein kinase domain in the interval 389–678; the sequence is LTLGKPLGEG…LTQTTNEEYL (290 aa). Residues 395–403, Lys425, 473–475, and Asn479 each bind ATP; these read LGEGCFGQV and EYA. Position 494 is a phosphotyrosine; by autocatalysis (Tyr494). Asp534 functions as the Proton acceptor in the catalytic mechanism. Phosphotyrosine; by autocatalysis is present on residues Tyr564, Tyr565, and Tyr677. A disordered region spans residues 683–729; the sequence is PLEQYSPSYPDTRSSCSSGDDSVFSPDAMPYDPCLPKSQHTNGTIKT. The segment covering 693-707 has biased composition (low complexity); it reads DTRSSCSSGDDSVFS. Residues 720–729 show a composition bias toward polar residues; the sequence is SQHTNGTIKT.

Belongs to the protein kinase superfamily. Tyr protein kinase family. Fibroblast growth factor receptor subfamily. In terms of assembly, monomer. Homodimer after ligand binding. Autophosphorylated. Binding of FGF family members together with heparan sulfate proteoglycan or heparin promotes receptor dimerization and autophosphorylation on tyrosine residues. Autophosphorylation occurs in trans between the two FGFR molecules present in the dimer. In terms of processing, N-glycosylated in the endoplasmic reticulum. The N-glycan chains undergo further maturation to an Endo H-resistant form in the Golgi apparatus. Post-translationally, ubiquitinated. FGFR2 is rapidly ubiquitinated after autophosphorylation, leading to internalization and degradation. Subject to degradation both in lysosomes and by the proteasome.

It localises to the cell membrane. It is found in the golgi apparatus. The protein resides in the cytoplasmic vesicle. The enzyme catalyses L-tyrosyl-[protein] + ATP = O-phospho-L-tyrosyl-[protein] + ADP + H(+). Its activity is regulated as follows. Present in an inactive conformation in the absence of bound ligand. Ligand binding leads to dimerization and activation by autophosphorylation on tyrosine residues. In terms of biological role, tyrosine-protein kinase that acts as a cell-surface receptor for fibroblast growth factors and plays an essential role in the regulation of cell proliferation, differentiation, migration and apoptosis, and in the regulation of embryonic development. Required for normal embryonic patterning, limb bud development, lung morphogenesis, osteogenesis and skin development. Plays an essential role in the regulation of osteoblast differentiation, proliferation and apoptosis, and is required for normal skeleton development. Promotes cell proliferation in keratinocytes and immature osteoblasts, but promotes apoptosis in differentiated osteoblasts. Phosphorylates PLCG1, FRS2 and PAK4. Ligand binding leads to the activation of several signaling cascades. Activation of PLCG1 leads to the production of the cellular signaling molecules diacylglycerol and inositol 1,4,5-trisphosphate. Phosphorylation of FRS2 triggers recruitment of GRB2, GAB1, PIK3R1 and SOS1, and mediates activation of RAS, MAPK1/ERK2, MAPK3/ERK1 and the MAP kinase signaling pathway, as well as of the AKT1 signaling pathway. FGFR2 signaling is down-regulated by ubiquitination, internalization and degradation. Mutations that lead to constitutive kinase activation or impair normal FGFR2 maturation, internalization and degradation lead to aberrant signaling. Over-expressed FGFR2 promotes activation of STAT1. This chain is Fibroblast growth factor receptor 2 (FGFR2), found in Notophthalmus viridescens (Eastern newt).